The following is a 418-amino-acid chain: UDP-glucuronic acid decarboxylase 1 (418 aa).

Residues M1 to K17 are Cytoplasmic-facing. The chain crosses the membrane as a helical; Signal-anchor for type II membrane protein span at residues I18–M38. Residues R39 to N418 are Lumenal-facing. Residues G96, F97, V98, D117, N118, F120, T121, G122, D142, and V143 each contribute to the NAD(+) site. Residues L147 and Y148 each contribute to the UDP-alpha-D-glucuronate site. Residues L157 and S159 each contribute to the NAD(+) site. UDP-alpha-D-glucuronate is bound at residue K175. T176 contributes to the NAD(+) binding site. Residues N183, G186, K189, and R190 each contribute to the UDP-alpha-D-glucuronate site. NAD(+) contacts are provided by A198, Y229, and K233. Y229 serves as the catalytic Proton acceptor. 3 residues coordinate UDP-alpha-D-glucuronate: Y243, Q246, and E247. NAD(+) is bound by residues T259, H265, and R270. N-linked (GlcNAc...) asparagine glycosylation is found at N314 and N383. Residues A397–N418 form a disordered region. Positions K406–N418 are enriched in basic residues.

It belongs to the NAD(P)-dependent epimerase/dehydratase family. UDP-glucuronic acid decarboxylase subfamily. As to quaternary structure, homodimer and homotetramer. NAD(+) is required as a cofactor.

Its subcellular location is the golgi apparatus. The protein localises to the golgi stack membrane. The catalysed reaction is UDP-alpha-D-glucuronate + H(+) = UDP-alpha-D-xylose + CO2. It functions in the pathway nucleotide-sugar biosynthesis; UDP-alpha-D-xylose biosynthesis; UDP-alpha-D-xylose from UDP-alpha-D-glucuronate: step 1/1. Its function is as follows. Catalyzes the NAD-dependent decarboxylation of UDP-glucuronic acid to UDP-xylose. Necessary for the biosynthesis of the core tetrasaccharide in glycosaminoglycan biosynthesis. Essential during embryogenesis for craniofacial development. This Danio rerio (Zebrafish) protein is UDP-glucuronic acid decarboxylase 1.